The following is a 162-amino-acid chain: Peroxiredoxin-2B (162 aa).

The region spanning Ile4–Leu162 is the Thioredoxin domain. Catalysis depends on Cys51, which acts as the Cysteine sulfenic acid (-SOH) intermediate.

Belongs to the peroxiredoxin family. Prx5 subfamily. In terms of assembly, monomer. In terms of tissue distribution, expressed in all tissues but mostly in reproductive tissues such as buds, flowers, siliques and seeds.

It is found in the cytoplasm. The enzyme catalyses [glutaredoxin]-dithiol + a hydroperoxide = [glutaredoxin]-disulfide + an alcohol + H2O. Its function is as follows. Reduces hydrogen peroxide and alkyl hydroperoxides with reducing equivalents provided through the thioredoxin or glutaredoxin system. May be involved in intracellular redox signaling. Thiol-specific peroxidase that catalyzes the reduction of hydrogen peroxide and organic hydroperoxides to water and alcohols, respectively. Plays a role in cell protection against oxidative stress by detoxifying peroxides and as sensor of hydrogen peroxide-mediated signaling events. This Arabidopsis thaliana (Mouse-ear cress) protein is Peroxiredoxin-2B (PRXIIB).